The primary structure comprises 1238 residues: Chitin synthase 4 (1238 aa).

Disordered stretches follow at residues 1 to 93 (MAEP…PERN) and 132 to 190 (TVSS…RRQK). Over residues 14–34 (TRDKSHSPYRESPSRRLRDVE) the composition is skewed to basic and acidic residues. Asparagine 50 carries an N-linked (GlcNAc...) asparagine glycan. 2 stretches are compositionally biased toward polar residues: residues 71 to 80 (SNPNPMSQSD) and 133 to 142 (VSSGSTQQDT). Positions 175–190 (RKDTRNLTEEEKRRQK) are enriched in basic and acidic residues. Residue asparagine 180 is glycosylated (N-linked (GlcNAc...) asparagine). 2 helical membrane passes run 200-220 (IWNI…LQCF) and 235-255 (VGLI…TFGF). Residues asparagine 365, asparagine 404, and asparagine 426 are each glycosylated (N-linked (GlcNAc...) asparagine). The chain crosses the membrane as a helical span at residues 487-507 (VVLYVSLVFILAIVAAKFFLA). Disordered regions lie at residues 548–570 (PKIT…RGSM) and 582–606 (YAVD…AKLL). Residues 553–562 (PASTVTGSDG) show a composition bias toward polar residues. N-linked (GlcNAc...) asparagine glycosylation is found at asparagine 617, asparagine 903, and asparagine 1030. 3 helical membrane-spanning segments follow: residues 1062 to 1082 (IGTL…ILSI), 1087 to 1107 (VPVI…ILIV), and 1115 to 1135 (YILW…VLPA).

It belongs to the chitin synthase family. Class IV subfamily. Maximal activity requires trypsin activation, suggesting a zymogenic nature.

Its subcellular location is the cell membrane. It catalyses the reaction [(1-&gt;4)-N-acetyl-beta-D-glucosaminyl](n) + UDP-N-acetyl-alpha-D-glucosamine = [(1-&gt;4)-N-acetyl-beta-D-glucosaminyl](n+1) + UDP + H(+). Activity is stimulated by Mg(2+), and is more inhibited by polyoxin D than by nikkomycin. Its function is as follows. Polymerizes chitin, a structural polymer of the cell wall and septum, by transferring the sugar moiety of UDP-GlcNAc to the non-reducing end of the growing chitin polymer. CHS4 synthesizes a large amount of chitin and appears to play a role in the process of cell separation. CHS4 is particularly well suited for functioning at the higher temperatures associated with its poorly characterized saprophic environment and with human infection. The polypeptide is Chitin synthase 4 (Exophiala dermatitidis (Black yeast-like fungus)).